A 386-amino-acid polypeptide reads, in one-letter code: Succinate--CoA ligase [ADP-forming] subunit beta (386 aa).

The ATP-grasp domain maps to Lys-9–Glu-244. Residues Lys-46, Gly-53–Gly-55, Glu-99, Cys-102, and Glu-107 each bind ATP. Mg(2+) is bound by residues Asn-199 and Asp-213. Substrate-binding positions include Asn-264 and Gly-320 to Met-322.

This sequence belongs to the succinate/malate CoA ligase beta subunit family. In terms of assembly, heterotetramer of two alpha and two beta subunits. It depends on Mg(2+) as a cofactor.

The enzyme catalyses succinate + ATP + CoA = succinyl-CoA + ADP + phosphate. The catalysed reaction is GTP + succinate + CoA = succinyl-CoA + GDP + phosphate. It participates in carbohydrate metabolism; tricarboxylic acid cycle; succinate from succinyl-CoA (ligase route): step 1/1. Succinyl-CoA synthetase functions in the citric acid cycle (TCA), coupling the hydrolysis of succinyl-CoA to the synthesis of either ATP or GTP and thus represents the only step of substrate-level phosphorylation in the TCA. The beta subunit provides nucleotide specificity of the enzyme and binds the substrate succinate, while the binding sites for coenzyme A and phosphate are found in the alpha subunit. This Ehrlichia canis (strain Jake) protein is Succinate--CoA ligase [ADP-forming] subunit beta.